The following is a 149-amino-acid chain: Urease accessory protein UreE (149 aa).

Belongs to the UreE family.

It is found in the cytoplasm. Its function is as follows. Involved in urease metallocenter assembly. Binds nickel. Probably functions as a nickel donor during metallocenter assembly. This chain is Urease accessory protein UreE, found in Corynebacterium efficiens (strain DSM 44549 / YS-314 / AJ 12310 / JCM 11189 / NBRC 100395).